Reading from the N-terminus, the 288-residue chain is Protoheme IX farnesyltransferase (288 aa).

The next 9 membrane-spanning stretches (helical) occupy residues 16-36 (VWSL…PYFN), 37-57 (LHYI…SMGA), 88-108 (INGL…LAAF), 111-131 (LYAA…YSYL), 138-158 (WNII…WYTV), 162-182 (FSIL…IHVW), 210-230 (AICI…PAFF), 236-256 (VYMI…IVFV), and 265-285 (LKLF…VLIF).

The protein belongs to the UbiA prenyltransferase family. Protoheme IX farnesyltransferase subfamily.

It is found in the cell membrane. It carries out the reaction heme b + (2E,6E)-farnesyl diphosphate + H2O = Fe(II)-heme o + diphosphate. Its pathway is porphyrin-containing compound metabolism; heme O biosynthesis; heme O from protoheme: step 1/1. Functionally, converts heme B (protoheme IX) to heme O by substitution of the vinyl group on carbon 2 of heme B porphyrin ring with a hydroxyethyl farnesyl side group. The polypeptide is Protoheme IX farnesyltransferase (Thermoplasma acidophilum (strain ATCC 25905 / DSM 1728 / JCM 9062 / NBRC 15155 / AMRC-C165)).